A 115-amino-acid polypeptide reads, in one-letter code: Dolichyl-diphosphooligosaccharide--protein glycosyltransferase subunit DAD1 (115 aa).

Residues 1–31 are Cytoplasmic-facing; that stretch reads MARSTGKDAQALFHSLRSAYAATPTTLKIID. A helical membrane pass occupies residues 32-52; it reads LYVGFAVFTALIQVVYMAIVG. The Lumenal segment spans residues 53-55; it reads SFP. Residues 56 to 76 traverse the membrane as a helical segment; that stretch reads FNSFLSGVLSCVGTAVLAVCL. Residues 77–94 lie on the Cytoplasmic side of the membrane; sequence RIQVNKDNKEFKDLPPER. Residues 95–115 form a helical membrane-spanning segment; the sequence is AFADFVLCNLVLHLVIMNFLG.

The protein belongs to the DAD/OST2 family. As to quaternary structure, component of the oligosaccharyltransferase (OST) complex.

It localises to the endoplasmic reticulum membrane. The protein operates within protein modification; protein glycosylation. Subunit of the oligosaccharyl transferase (OST) complex that catalyzes the initial transfer of a defined glycan (Glc(3)Man(9)GlcNAc(2) in eukaryotes) from the lipid carrier dolichol-pyrophosphate to an asparagine residue within an Asn-X-Ser/Thr consensus motif in nascent polypeptide chains, the first step in protein N-glycosylation. N-glycosylation occurs cotranslationally and the complex associates with the Sec61 complex at the channel-forming translocon complex that mediates protein translocation across the endoplasmic reticulum (ER). All subunits are required for a maximal enzyme activity. The chain is Dolichyl-diphosphooligosaccharide--protein glycosyltransferase subunit DAD1 (DAD1) from Citrus unshiu (Satsuma mandarin).